The following is a 334-amino-acid chain: Serpentine receptor class alpha-11 (334 aa).

At 1 to 23 (MTTNNPVCASDAHMEMYSSKLYT) the chain is on the extracellular side. The chain crosses the membrane as a helical span at residues 24–44 (SALFLNLIIATTSMILTGFAI). Topologically, residues 45 to 57 (QKLFMESIINIST) are cytoplasmic. A helical membrane pass occupies residues 58 to 80 (RMFLFCGLMCCSLHQTAYIVLRI). Over 81–105 (QVIYQVFFKLSEPCNLYYPAIDCKY) the chain is Extracellular. A helical transmembrane segment spans residues 106–126 (VTFSLVAGNTGMIFIQSAMTI). Residues 127-145 (DRIFATIFPKLWPKLKYWP) lie on the Cytoplasmic side of the membrane. A helical transmembrane segment spans residues 146–166 (GVVLSILMIACNYANVQIIFW). Topologically, residues 167-191 (GDPLTEYVPTCGQFPSKSVNRFQTF) are extracellular. Residues 192–212 (LAIALYMSIAHMVINVIILYI) traverse the membrane as a helical segment. At 213–239 (NVLQDRQQSKSFNVNQRYQSREALKSS) the chain is on the cytoplasmic side. Residues 240 to 260 (QAIFFLSMSQFFACLIYSVFT) traverse the membrane as a helical segment. Residues 261 to 277 (KVFLEFQLNLSPLQSGL) are Extracellular-facing. Residues 278–298 (VLALSYTTPYACIAIPSLIIF) traverse the membrane as a helical segment. At 299-334 (TFRFIKNQRLRNINELRSQTETGDECMRKIAKIWEK) the chain is on the cytoplasmic side.

It belongs to the nematode receptor-like protein sra family. In terms of tissue distribution, expressed in interneurons AIY and AVB in L1 larvae. In adults, strong expression is seen in AIY and AIA but only weak expression in AVB.

It is found in the membrane. Functionally, a G protein-coupled receptor required for olfactory imprinting a requisite in ordorant response such as benzaldehyde and isoamylalcohol. The chain is Serpentine receptor class alpha-11 (sra-11) from Caenorhabditis elegans.